We begin with the raw amino-acid sequence, 182 residues long: Isopentenyl-diphosphate Delta-isomerase (182 aa).

2 residues coordinate Mn(2+): histidine 25 and histidine 32. In terms of domain architecture, Nudix hydrolase spans 30–164 (RLHLAFSSWL…PWAFSPWMVM (135 aa)). Residue cysteine 67 is part of the active site. Histidine 69 is a Mn(2+) binding site. Residue glutamate 87 participates in Mg(2+) binding. Glutamate 114 and glutamate 116 together coordinate Mn(2+). The active site involves glutamate 116.

Belongs to the IPP isomerase type 1 family. In terms of assembly, homodimer. Mg(2+) is required as a cofactor. The cofactor is Mn(2+).

Its subcellular location is the cytoplasm. It carries out the reaction isopentenyl diphosphate = dimethylallyl diphosphate. It participates in isoprenoid biosynthesis; dimethylallyl diphosphate biosynthesis; dimethylallyl diphosphate from isopentenyl diphosphate: step 1/1. Its function is as follows. Catalyzes the 1,3-allylic rearrangement of the homoallylic substrate isopentenyl (IPP) to its highly electrophilic allylic isomer, dimethylallyl diphosphate (DMAPP). The sequence is that of Isopentenyl-diphosphate Delta-isomerase from Escherichia coli O139:H28 (strain E24377A / ETEC).